The sequence spans 69 residues: Probable molybdenum-pterin-binding protein (69 aa).

In terms of domain architecture, Mop spans 2 to 68 (KISARNQLKG…IKATSVMVGV (67 aa)).

This sequence to C.pasteurianum MOP proteins.

Functionally, binds one mole of molybdenum per mole of protein and contains a pterin. The protein is Probable molybdenum-pterin-binding protein of Haemophilus influenzae (strain ATCC 51907 / DSM 11121 / KW20 / Rd).